The sequence spans 85 residues: uncharacterized protein (85 aa).

An N-terminal signal peptide occupies residues 1–35 (MIEDPSKKISLWQKWINVDPKKRILFSLGLFALSA).

It localises to the secreted. This is an uncharacterized protein from Dictyostelium discoideum (Social amoeba).